We begin with the raw amino-acid sequence, 103 residues long: Large ribosomal subunit protein bL21 (103 aa).

This sequence belongs to the bacterial ribosomal protein bL21 family. As to quaternary structure, part of the 50S ribosomal subunit. Contacts protein L20.

Its function is as follows. This protein binds to 23S rRNA in the presence of protein L20. This Paraburkholderia phymatum (strain DSM 17167 / CIP 108236 / LMG 21445 / STM815) (Burkholderia phymatum) protein is Large ribosomal subunit protein bL21.